An 826-amino-acid polypeptide reads, in one-letter code: Periplasmic nitrate reductase (826 aa).

Positions 1-32 (MSISRREFLKANAAVAAATAVGATLPVKIVEA) form a signal peptide, tat-type signal. The 4Fe-4S Mo/W bis-MGD-type domain maps to 39–95 (IKWDKAPCRFCGVGCSVLVGTDNGKVVATKGDPESPVNKGLNCIKGYFLSKIMYGKD). 4 residues coordinate [4Fe-4S] cluster: C46, C49, C53, and C81. Residues K83, Q150, N175, C179, 212-219 (WGANMAEM), 262-264 (QSD), M372, Q376, N482, 508-509 (SD), K531, D558, and 716-725 (TGRVLEHWHT) each bind Mo-bis(molybdopterin guanine dinucleotide). F792 provides a ligand contact to substrate. Residues N800 and K817 each coordinate Mo-bis(molybdopterin guanine dinucleotide).

This sequence belongs to the prokaryotic molybdopterin-containing oxidoreductase family. NasA/NapA/NarB subfamily. Component of the periplasmic nitrate reductase NapAB complex composed of NapA and NapB. [4Fe-4S] cluster is required as a cofactor. Requires Mo-bis(molybdopterin guanine dinucleotide) as cofactor. Post-translationally, predicted to be exported by the Tat system. The position of the signal peptide cleavage has not been experimentally proven.

The protein resides in the periplasm. It carries out the reaction 2 Fe(II)-[cytochrome] + nitrate + 2 H(+) = 2 Fe(III)-[cytochrome] + nitrite + H2O. Functionally, catalytic subunit of the periplasmic nitrate reductase complex NapAB. Receives electrons from NapB and catalyzes the reduction of nitrate to nitrite. The polypeptide is Periplasmic nitrate reductase (Shewanella halifaxensis (strain HAW-EB4)).